Reading from the N-terminus, the 396-residue chain is Small ribosomal subunit protein uS9m (396 aa).

Lys-287 bears the N6-acetyllysine mark. Residues 374–396 (PRVRERKKPGQEGARRKFTWKKR) form a disordered region.

The protein belongs to the universal ribosomal protein uS9 family. In terms of assembly, component of the mitochondrial small ribosomal subunit (mt-SSU). Mature mammalian 55S mitochondrial ribosomes consist of a small (28S) and a large (39S) subunit. The 28S small subunit contains a 12S ribosomal RNA (12S mt-rRNA) and 30 different proteins. The 39S large subunit contains a 16S rRNA (16S mt-rRNA), a copy of mitochondrial valine transfer RNA (mt-tRNA(Val)), which plays an integral structural role, and 52 different proteins.

It localises to the mitochondrion. This Homo sapiens (Human) protein is Small ribosomal subunit protein uS9m (MRPS9).